Here is a 527-residue protein sequence, read N- to C-terminus: Peptide chain release factor 3 (527 aa).

The 268-residue stretch at 11-278 (AKRRTFAIIS…GFVEWAPPPL (268 aa)) folds into the tr-type G domain. GTP contacts are provided by residues 20–27 (SHPDAGKT), 87–91 (DTPGH), and 141–144 (NKMD).

It belongs to the TRAFAC class translation factor GTPase superfamily. Classic translation factor GTPase family. PrfC subfamily.

It is found in the cytoplasm. Increases the formation of ribosomal termination complexes and stimulates activities of RF-1 and RF-2. It binds guanine nucleotides and has strong preference for UGA stop codons. It may interact directly with the ribosome. The stimulation of RF-1 and RF-2 is significantly reduced by GTP and GDP, but not by GMP. In Saccharophagus degradans (strain 2-40 / ATCC 43961 / DSM 17024), this protein is Peptide chain release factor 3.